A 71-amino-acid polypeptide reads, in one-letter code: Exodeoxyribonuclease 7 small subunit (71 aa).

Belongs to the XseB family. Heterooligomer composed of large and small subunits.

Its subcellular location is the cytoplasm. The catalysed reaction is Exonucleolytic cleavage in either 5'- to 3'- or 3'- to 5'-direction to yield nucleoside 5'-phosphates.. Bidirectionally degrades single-stranded DNA into large acid-insoluble oligonucleotides, which are then degraded further into small acid-soluble oligonucleotides. This Streptococcus pyogenes serotype M1 protein is Exodeoxyribonuclease 7 small subunit.